The chain runs to 435 residues: Adenylosuccinate synthetase (435 aa).

GTP-binding positions include 19–25 (GDEGKGK) and 49–51 (GHT). Asp20 (proton acceptor) is an active-site residue. Mg(2+) is bound by residues Asp20 and Gly49. IMP-binding positions include 20–23 (DEGK), 47–50 (NAGH), Thr139, Arg153, Asn233, Thr248, and Arg312. The Proton donor role is filled by His50. 308–314 (VTTGRKR) is a binding site for substrate. GTP contacts are provided by residues Arg314, 340 to 342 (KLD), and 422 to 424 (GVG).

This sequence belongs to the adenylosuccinate synthetase family. Homodimer. Requires Mg(2+) as cofactor.

It localises to the cytoplasm. It carries out the reaction IMP + L-aspartate + GTP = N(6)-(1,2-dicarboxyethyl)-AMP + GDP + phosphate + 2 H(+). It functions in the pathway purine metabolism; AMP biosynthesis via de novo pathway; AMP from IMP: step 1/2. Plays an important role in the de novo pathway and in the salvage pathway of purine nucleotide biosynthesis. Catalyzes the first committed step in the biosynthesis of AMP from IMP. In Brugia malayi (Filarial nematode worm), this protein is Adenylosuccinate synthetase.